Consider the following 212-residue polypeptide: Uridine kinase (212 aa).

ATP is bound at residue 13 to 20 (GASASGKS).

The protein belongs to the uridine kinase family.

The protein localises to the cytoplasm. It carries out the reaction uridine + ATP = UMP + ADP + H(+). It catalyses the reaction cytidine + ATP = CMP + ADP + H(+). The protein operates within pyrimidine metabolism; CTP biosynthesis via salvage pathway; CTP from cytidine: step 1/3. It functions in the pathway pyrimidine metabolism; UMP biosynthesis via salvage pathway; UMP from uridine: step 1/1. This is Uridine kinase from Shewanella frigidimarina (strain NCIMB 400).